Consider the following 229-residue polypeptide: Demethylmenaquinone methyltransferase (229 aa).

S-adenosyl-L-methionine-binding positions include threonine 57, aspartate 77, and 101–102 (DV).

The protein belongs to the class I-like SAM-binding methyltransferase superfamily. MenG/UbiE family.

The enzyme catalyses a 2-demethylmenaquinol + S-adenosyl-L-methionine = a menaquinol + S-adenosyl-L-homocysteine + H(+). It functions in the pathway quinol/quinone metabolism; menaquinone biosynthesis; menaquinol from 1,4-dihydroxy-2-naphthoate: step 2/2. Functionally, methyltransferase required for the conversion of demethylmenaquinol (DMKH2) to menaquinol (MKH2). This Chlamydia trachomatis serovar L2 (strain ATCC VR-902B / DSM 19102 / 434/Bu) protein is Demethylmenaquinone methyltransferase.